We begin with the raw amino-acid sequence, 302 residues long: tRNA dimethylallyltransferase (302 aa).

Residue 9-16 (GPTGSGKT) coordinates ATP. Residue 11 to 16 (TGSGKT) participates in substrate binding.

Belongs to the IPP transferase family. Monomer. Requires Mg(2+) as cofactor.

It catalyses the reaction adenosine(37) in tRNA + dimethylallyl diphosphate = N(6)-dimethylallyladenosine(37) in tRNA + diphosphate. In terms of biological role, catalyzes the transfer of a dimethylallyl group onto the adenine at position 37 in tRNAs that read codons beginning with uridine, leading to the formation of N6-(dimethylallyl)adenosine (i(6)A). The protein is tRNA dimethylallyltransferase of Thermus thermophilus (strain ATCC BAA-163 / DSM 7039 / HB27).